The sequence spans 1253 residues: Myosin-1 (1253 aa).

The tract at residues 1–40 is disordered; that stretch reads MGHSRRPVGGEKKSRGFGRSKAAADVGDGRQAGKPQVKKA. The Myosin motor domain occupies 50 to 729; sequence IGVSDLTLLS…TLFALEAMRD (680 aa). An ATP-binding site is contributed by 143–150; it reads GESGAGKT. Residue Ser371 is modified to Phosphoserine. Residues 418–500 form an actin-binding region; sequence SIGILDIYGF…PGVFAALNDA (83 aa). IQ domains follow at residues 733-753 and 754-779; these read HNMA…RIEC and ATRI…QGHQ. Positions 787-977 constitute a TH1 domain; it reads RRRMSLLGSR…TIHTGAGEPA (191 aa). Disordered stretches follow at residues 959–1083 and 1139–1253; these read TGDD…PKKP and QVAP…DDDW. Residues 1029 to 1055 show a composition bias toward low complexity; sequence PQPAAAQPAAPQPAARVVPQPVAAVAA. Composition is skewed to pro residues over residues 1068-1081 and 1143-1155; these read APPP…PAPK and APKP…PPAA. The region spanning 1080–1141 is the SH3 domain; that stretch reads PKKPTAKALY…PEAYLEEQVA (62 aa). Composition is skewed to low complexity over residues 1156 to 1173 and 1221 to 1235; these read PRST…AKAK and NSAS…LAEA.

It belongs to the TRAFAC class myosin-kinesin ATPase superfamily. Myosin family. Phosphorylation of the TEDS site (Ser-371) is required for the polarization of the actin cytoskeleton. Phosphorylation probably activates the myosin-I ATPase activity.

The protein resides in the cytoplasm. It is found in the cytoskeleton. Its subcellular location is the actin patch. Functionally, type-I myosin implicated in the organization of the actin cytoskeleton. Required for proper actin cytoskeleton polarization. At the cell cortex, assembles in patch-like structures together with proteins from the actin-polymerizing machinery and promotes actin assembly. Functions as actin nucleation-promoting factor (NPF) for the Arp2/3 complex. Plays an important role in polarized growth, spore germination, hyphal morphogenesis, and septal wall formation. The protein is Myosin-1 (myoA) of Aspergillus clavatus (strain ATCC 1007 / CBS 513.65 / DSM 816 / NCTC 3887 / NRRL 1 / QM 1276 / 107).